We begin with the raw amino-acid sequence, 46 residues long: Pape peptide (46 aa).

The segment covering 1-10 has biased composition (low complexity); it reads KQLLKEALAP. Positions 1-46 are disordered; sequence KQLLKEALAPEPAPKPAPEPAPEPAPEPAPEAAPEPAAAAPEAAPE. The span at 11 to 33 shows a compositional bias: pro residues; the sequence is EPAPKPAPEPAPEPAPEPAPEAA. PAPE repeat units follow at residues 16–19, 20–23, 24–27, and 28–31; these read PAPE. Over residues 34–46 the composition is skewed to low complexity; sequence PEPAAAAPEAAPE.

As to expression, expressed by the venom gland.

Its subcellular location is the secreted. This is Pape peptide from Tityus stigmurus (Brazilian scorpion).